The following is a 591-amino-acid chain: Probable acetolactate synthase large subunit (591 aa).

E47 provides a ligand contact to thiamine diphosphate. FAD contacts are provided by residues R149, 258-279 (HGTK…IGCR), and 301-320 (DIDP…IVGD). A thiamine pyrophosphate binding region spans residues 396–476 (QNQMWMAHFF…VVICIFDNRT (81 aa)). Residues D447 and N474 each contribute to the Mg(2+) site.

This sequence belongs to the TPP enzyme family. In terms of assembly, dimer of large and small chains. Mg(2+) is required as a cofactor. The cofactor is thiamine diphosphate.

The catalysed reaction is 2 pyruvate + H(+) = (2S)-2-acetolactate + CO2. The protein operates within amino-acid biosynthesis; L-isoleucine biosynthesis; L-isoleucine from 2-oxobutanoate: step 1/4. It functions in the pathway amino-acid biosynthesis; L-valine biosynthesis; L-valine from pyruvate: step 1/4. The sequence is that of Probable acetolactate synthase large subunit (ilvB) from Methanocaldococcus jannaschii (strain ATCC 43067 / DSM 2661 / JAL-1 / JCM 10045 / NBRC 100440) (Methanococcus jannaschii).